The following is a 492-amino-acid chain: Proline--tRNA ligase (492 aa).

This sequence belongs to the class-II aminoacyl-tRNA synthetase family. ProS type 3 subfamily. Homodimer.

The protein localises to the cytoplasm. The enzyme catalyses tRNA(Pro) + L-proline + ATP = L-prolyl-tRNA(Pro) + AMP + diphosphate. In terms of biological role, catalyzes the attachment of proline to tRNA(Pro) in a two-step reaction: proline is first activated by ATP to form Pro-AMP and then transferred to the acceptor end of tRNA(Pro). The polypeptide is Proline--tRNA ligase (Flavobacterium psychrophilum (strain ATCC 49511 / DSM 21280 / CIP 103535 / JIP02/86)).